The following is a 261-amino-acid chain: Thiamine thiazole synthase (261 aa).

Residues Ser40, Glu59–Arg60, Gly67, Val133, and His159–Asp161 each bind NAD(+). Residues Asp161 and His176 each contribute to the Fe cation site. 2 residues coordinate NAD(+): Ser179 and Met226. Arg236 is a glycine binding site.

Belongs to the THI4 family. As to quaternary structure, homooctamer; tetramer of dimers. Fe(2+) is required as a cofactor.

The enzyme catalyses hydrogen sulfide + glycine + NAD(+) = ADP-5-ethyl-4-methylthiazole-2-carboxylate + nicotinamide + 3 H2O + H(+). It participates in cofactor biosynthesis; thiamine diphosphate biosynthesis. In terms of biological role, involved in the biosynthesis of the thiazole moiety of thiamine. Catalyzes the conversion of NAD and glycine to adenosine diphosphate 5-(2-hydroxyethyl)-4-methylthiazole-2-carboxylate (ADT), an adenylated thiazole intermediate, using free sulfide as a source of sulfur. In Methanococcus maripaludis (strain C5 / ATCC BAA-1333), this protein is Thiamine thiazole synthase.